We begin with the raw amino-acid sequence, 313 residues long: Acetyl-coenzyme A carboxylase carboxyl transferase subunit beta, chloroplastic (313 aa).

The region spanning 47 to 313 is the CoA carboxyltransferase N-terminal domain; sequence LWTRCDNCEN…SAPCRRSNNS (267 aa). Positions 51, 54, 70, and 73 each coordinate Zn(2+). The C4-type zinc finger occupies 51 to 73; sequence CDNCENMLYIRFLRQNKRICEEC.

Belongs to the AccD/PCCB family. As to quaternary structure, acetyl-CoA carboxylase is a heterohexamer composed of biotin carboxyl carrier protein, biotin carboxylase and 2 subunits each of ACCase subunit alpha and ACCase plastid-coded subunit beta (accD). The cofactor is Zn(2+).

It localises to the plastid. The protein resides in the chloroplast stroma. It carries out the reaction N(6)-carboxybiotinyl-L-lysyl-[protein] + acetyl-CoA = N(6)-biotinyl-L-lysyl-[protein] + malonyl-CoA. It participates in lipid metabolism; malonyl-CoA biosynthesis; malonyl-CoA from acetyl-CoA: step 1/1. In terms of biological role, component of the acetyl coenzyme A carboxylase (ACC) complex. Biotin carboxylase (BC) catalyzes the carboxylation of biotin on its carrier protein (BCCP) and then the CO(2) group is transferred by the transcarboxylase to acetyl-CoA to form malonyl-CoA. The protein is Acetyl-coenzyme A carboxylase carboxyl transferase subunit beta, chloroplastic of Anthoceros angustus (Hornwort).